We begin with the raw amino-acid sequence, 320 residues long: Glutathione synthetase (320 aa).

The 186-residue stretch at K130–E315 folds into the ATP-grasp domain. An ATP-binding site is contributed by W156 to G212. Mg(2+) contacts are provided by E286 and N288.

It belongs to the prokaryotic GSH synthase family. Mg(2+) serves as cofactor. Mn(2+) is required as a cofactor.

The enzyme catalyses gamma-L-glutamyl-L-cysteine + glycine + ATP = glutathione + ADP + phosphate + H(+). The protein operates within sulfur metabolism; glutathione biosynthesis; glutathione from L-cysteine and L-glutamate: step 2/2. This chain is Glutathione synthetase, found in Buchnera aphidicola subsp. Acyrthosiphon pisum (strain APS) (Acyrthosiphon pisum symbiotic bacterium).